Consider the following 123-residue polypeptide: Large ribosomal subunit protein uL24 (123 aa).

The disordered stretch occupies residues 100-123 (RRPDGSTYKAERSVRISRKTGKEI).

It belongs to the universal ribosomal protein uL24 family. As to quaternary structure, part of the 50S ribosomal subunit.

One of two assembly initiator proteins, it binds directly to the 5'-end of the 23S rRNA, where it nucleates assembly of the 50S subunit. Its function is as follows. One of the proteins that surrounds the polypeptide exit tunnel on the outside of the subunit. This Nocardioides sp. (strain ATCC BAA-499 / JS614) protein is Large ribosomal subunit protein uL24.